We begin with the raw amino-acid sequence, 380 residues long: Erythronate-4-phosphate dehydrogenase (380 aa).

Residues Ser-45 and Thr-66 each coordinate substrate. Asp-146 serves as a coordination point for NAD(+). Residue Arg-207 is part of the active site. An NAD(+)-binding site is contributed by Asp-232. The active site involves Glu-237. His-254 (proton donor) is an active-site residue. Residue Gly-257 participates in NAD(+) binding. Tyr-258 provides a ligand contact to substrate.

This sequence belongs to the D-isomer specific 2-hydroxyacid dehydrogenase family. PdxB subfamily. Homodimer.

The protein localises to the cytoplasm. The enzyme catalyses 4-phospho-D-erythronate + NAD(+) = (R)-3-hydroxy-2-oxo-4-phosphooxybutanoate + NADH + H(+). Its pathway is cofactor biosynthesis; pyridoxine 5'-phosphate biosynthesis; pyridoxine 5'-phosphate from D-erythrose 4-phosphate: step 2/5. Functionally, catalyzes the oxidation of erythronate-4-phosphate to 3-hydroxy-2-oxo-4-phosphonooxybutanoate. This is Erythronate-4-phosphate dehydrogenase from Marinomonas sp. (strain MWYL1).